The following is a 552-amino-acid chain: Putative E3 ubiquitin-protein ligase ARI6 (552 aa).

A TRIAD supradomain region spans residues 129 to 343; it reads REFTCGICFE…GGYYACNRYE (215 aa). 18 residues coordinate Zn(2+): Cys133, Cys136, Cys150, His152, Cys155, Cys158, Cys178, Cys183, Cys222, Cys227, Cys245, Cys247, Cys252, Cys255, His260, Cys265, Cys292, and Cys295. An RING-type 1 zinc finger spans residues 133 to 183; it reads CGICFESYPLEETISVSCGHPFCATCWTGYISTSINDGPGCLMLKCPYPCC. An IBR-type zinc finger spans residues 202–265; it reads ERYYRYFLRS…SEEAHRPVDC (64 aa). The segment at 292–322 adopts an RING-type 2; atypical zinc-finger fold; the sequence is CPKCKRPIEKNHGCMHMTCTPPCKFEFCWLC. Cys305 is a catalytic residue. Zn(2+) is bound by residues Cys310, Cys314, Cys319, Cys322, His329, and Cys339. The segment at 518 to 552 is disordered; sequence HAASSKPANCKPSSNTKDGGKGKKEALTMAGSAET. A compositionally biased stretch (polar residues) spans 519–534; the sequence is AASSKPANCKPSSNTK.

Belongs to the RBR family. Ariadne subfamily. Zn(2+) serves as cofactor.

The enzyme catalyses [E2 ubiquitin-conjugating enzyme]-S-ubiquitinyl-L-cysteine + [acceptor protein]-L-lysine = [E2 ubiquitin-conjugating enzyme]-L-cysteine + [acceptor protein]-N(6)-ubiquitinyl-L-lysine.. The protein operates within protein modification; protein ubiquitination. Might act as an E3 ubiquitin-protein ligase, or as part of E3 complex, which accepts ubiquitin from specific E2 ubiquitin-conjugating enzymes and then transfers it to substrates. This chain is Putative E3 ubiquitin-protein ligase ARI6 (ARI6), found in Arabidopsis thaliana (Mouse-ear cress).